The following is a 143-amino-acid chain: Transcriptional regulator MraZ (143 aa).

SpoVT-AbrB domains are found at residues 5–47 and 76–119; these read TYTP…PRSE and TDEQ…DAQA.

It belongs to the MraZ family. As to quaternary structure, forms oligomers.

The protein resides in the cytoplasm. Its subcellular location is the nucleoid. The protein is Transcriptional regulator MraZ of Mycobacterium ulcerans (strain Agy99).